A 486-amino-acid polypeptide reads, in one-letter code: Ribulose bisphosphate carboxylase large chain 3 (486 aa).

Substrate-binding residues include Asn-125 and Thr-175. Lys-177 acts as the Proton acceptor in catalysis. A substrate-binding site is contributed by Lys-179. Positions 203, 205, and 206 each coordinate Mg(2+). Residue Lys-203 is modified to N6-carboxylysine. His-295 functions as the Proton acceptor in the catalytic mechanism. Substrate is bound by residues Arg-296, His-328, and Ser-380.

It belongs to the RuBisCO large chain family. Type I subfamily. In terms of assembly, heterohexadecamer of 8 large chains and 8 small chains. Mg(2+) serves as cofactor.

The catalysed reaction is 2 (2R)-3-phosphoglycerate + 2 H(+) = D-ribulose 1,5-bisphosphate + CO2 + H2O. It catalyses the reaction D-ribulose 1,5-bisphosphate + O2 = 2-phosphoglycolate + (2R)-3-phosphoglycerate + 2 H(+). Functionally, ruBisCO catalyzes two reactions: the carboxylation of D-ribulose 1,5-bisphosphate, the primary event in carbon dioxide fixation, as well as the oxidative fragmentation of the pentose substrate. Both reactions occur simultaneously and in competition at the same active site. The chain is Ribulose bisphosphate carboxylase large chain 3 from Bradyrhizobium sp. (strain BTAi1 / ATCC BAA-1182).